The primary structure comprises 288 residues: Tryptophan 2,3-dioxygenase (288 aa).

Substrate is bound by residues 57 to 61, Tyr119, and Arg123; that span reads FIIQH. Heme is bound at residue His246. A substrate-binding site is contributed by Thr260.

This sequence belongs to the tryptophan 2,3-dioxygenase family. Homotetramer. Heme serves as cofactor.

It carries out the reaction L-tryptophan + O2 = N-formyl-L-kynurenine. It functions in the pathway amino-acid degradation; L-tryptophan degradation via kynurenine pathway; L-kynurenine from L-tryptophan: step 1/2. Heme-dependent dioxygenase that catalyzes the oxidative cleavage of the L-tryptophan (L-Trp) pyrrole ring and converts L-tryptophan to N-formyl-L-kynurenine. Catalyzes the oxidative cleavage of the indole moiety. This is Tryptophan 2,3-dioxygenase from Pseudomonas aeruginosa (strain UCBPP-PA14).